Here is a 295-residue protein sequence, read N- to C-terminus: ATP synthase gamma chain (295 aa).

This sequence belongs to the ATPase gamma chain family. As to quaternary structure, F-type ATPases have 2 components, CF(1) - the catalytic core - and CF(0) - the membrane proton channel. CF(1) has five subunits: alpha(3), beta(3), gamma(1), delta(1), epsilon(1). CF(0) has three main subunits: a, b and c.

The protein resides in the cell inner membrane. In terms of biological role, produces ATP from ADP in the presence of a proton gradient across the membrane. The gamma chain is believed to be important in regulating ATPase activity and the flow of protons through the CF(0) complex. This is ATP synthase gamma chain from Campylobacter curvus (strain 525.92).